The chain runs to 463 residues: tRNA (guanine(10)-N(2))-methyltransferase TRMT11 (463 aa).

Ala-2 is modified (N-acetylalanine).

Belongs to the class I-like SAM-binding methyltransferase superfamily. TRM11 methyltransferase family. As to quaternary structure, part of the heterodimeric TRMT11-TRM112 methyltransferase complex; this complex forms an active tRNA methyltransferase, where TRMT112 acts as an activator of the catalytic subunit TRMT11.

It is found in the cytoplasm. It catalyses the reaction guanosine(10) in tRNA + S-adenosyl-L-methionine = N(2)-methylguanosine(10) in tRNA + S-adenosyl-L-homocysteine + H(+). In terms of biological role, catalytic subunit of the TRMT11-TRM112 methyltransferase complex, that specifically mediates the S-adenosyl-L-methionine-dependent N(2)-methylation of guanosine nucleotide at position 10 (m2G10) in tRNAs. This is one of the major tRNA (guanine-N(2))-methyltransferases. The polypeptide is tRNA (guanine(10)-N(2))-methyltransferase TRMT11 (Rattus norvegicus (Rat)).